The following is a 105-amino-acid chain: UPF0235 protein RT0827 (105 aa).

It belongs to the UPF0235 family.

In Rickettsia typhi (strain ATCC VR-144 / Wilmington), this protein is UPF0235 protein RT0827.